The following is a 431-amino-acid chain: Protein S-Myc (431 aa).

Tyr36 bears the Phosphotyrosine; by Tyr-kinases mark. One can recognise a bHLH domain in the interval 348 to 400 (ERRRNHNRMERQRRDIMRSSFLNLRDLVPELVHNEKAAKVVILKKATEYIHTL). The interval 400–421 (LQADESKLLVERKKLYERQQQL) is leucine-zipper.

As to quaternary structure, efficient DNA binding requires dimerization with another bHLH protein.

The protein localises to the nucleus. Its function is as follows. Has apoptosis-inducing activity. The polypeptide is Protein S-Myc (Mycs) (Mus musculus (Mouse)).